The following is a 406-amino-acid chain: Succinyl-diaminopimelate desuccinylase (406 aa).

Histidine 95 serves as a coordination point for Zn(2+). Aspartate 97 is a catalytic residue. Aspartate 128 contacts Zn(2+). Glutamate 162 serves as the catalytic Proton acceptor. Glutamate 163, glutamate 191, and histidine 377 together coordinate Zn(2+).

This sequence belongs to the peptidase M20A family. DapE subfamily. As to quaternary structure, homodimer. It depends on Zn(2+) as a cofactor. Co(2+) is required as a cofactor.

The enzyme catalyses N-succinyl-(2S,6S)-2,6-diaminopimelate + H2O = (2S,6S)-2,6-diaminopimelate + succinate. It participates in amino-acid biosynthesis; L-lysine biosynthesis via DAP pathway; LL-2,6-diaminopimelate from (S)-tetrahydrodipicolinate (succinylase route): step 3/3. In terms of biological role, catalyzes the hydrolysis of N-succinyl-L,L-diaminopimelic acid (SDAP), forming succinate and LL-2,6-diaminopimelate (DAP), an intermediate involved in the bacterial biosynthesis of lysine and meso-diaminopimelic acid, an essential component of bacterial cell walls. The chain is Succinyl-diaminopimelate desuccinylase from Polaromonas naphthalenivorans (strain CJ2).